The chain runs to 293 residues: Ribosomal protein L11 methyltransferase (293 aa).

Residues threonine 145, glycine 166, aspartate 188, and asparagine 230 each contribute to the S-adenosyl-L-methionine site.

This sequence belongs to the methyltransferase superfamily. PrmA family.

Its subcellular location is the cytoplasm. The enzyme catalyses L-lysyl-[protein] + 3 S-adenosyl-L-methionine = N(6),N(6),N(6)-trimethyl-L-lysyl-[protein] + 3 S-adenosyl-L-homocysteine + 3 H(+). Functionally, methylates ribosomal protein L11. The sequence is that of Ribosomal protein L11 methyltransferase from Salmonella agona (strain SL483).